We begin with the raw amino-acid sequence, 510 residues long: Sucrose transport protein SUC4 (510 aa).

Positions 1-34 (MATSDQDRRHRVTRNRPPIARPSTSSSRPVVSPP) are disordered. Over 1 to 45 (MATSDQDRRHRVTRNRPPIARPSTSSSRPVVSPPRSKVSKRVLLR) the chain is Cytoplasmic. Over residues 21 to 34 (RPSTSSSRPVVSPP) the composition is skewed to low complexity. Serine 23 carries the post-translational modification Phosphoserine. The chain crosses the membrane as a helical span at residues 46-66 (VASVACGIQFGWALQLSLLTP). Over 67-71 (YVQEL) the chain is Extracellular. Residues 72 to 92 (GIPHAWASVIWLCGPLSGLFV) traverse the membrane as a helical segment. The Cytoplasmic segment spans residues 93-111 (QPLVGHSSDRCTSKYGRRR). The chain crosses the membrane as a helical span at residues 112–132 (PFIVAGAVAISISVMVIGHAA). The Extracellular segment spans residues 133–148 (DIGWAFGDREGKIKPR). Residues 149-169 (AIVAFVLGFWILDVANNMTQG) form a helical membrane-spanning segment. Residues 170–187 (PCRALLADLTENDNRRTR) lie on the Cytoplasmic side of the membrane. A helical membrane pass occupies residues 188–208 (VANGYFSLFMAVGNVLGYATG). Over 209-233 (SYNGWYKIFTFTKTVACNVECANLK) the chain is Extracellular. The helical transmembrane segment at 234-254 (SAFYIDVVFIAITTILSVSAA) threads the bilayer. Topologically, residues 255–291 (HEVPLASLASEAHGQTSGTDEAFLSEIFGTFRYFPGN) are cytoplasmic. The helical transmembrane segment at 292-312 (VWIILLVTALTWIGWFPFILF) threads the bilayer. Residues 313-335 (DTDWMGREIYGGEPNIGTSYSAG) lie on the Extracellular side of the membrane. A helical transmembrane segment spans residues 336–356 (VSMGALGLMLNSVFLGITSVL). Residues 357-365 (MEKLCRKWG) lie on the Cytoplasmic side of the membrane. Residues 366 to 386 (AGFVWGISNILMAICFLGMII) traverse the membrane as a helical segment. Over 387 to 402 (TSFVASHLGYIGHEQP) the chain is Extracellular. Residues 403 to 423 (PASIVFAAVLIFTILGIPLAI) traverse the membrane as a helical segment. Residues 424-443 (TYSVPYALISIRIESLGLGQ) lie on the Cytoplasmic side of the membrane. The helical transmembrane segment at 444 to 464 (GLSLGVLNLAIVIPQVIVSVG) threads the bilayer. Residues 465-477 (SGPWDQLFGGGNS) lie on the Extracellular side of the membrane. A helical membrane pass occupies residues 478-498 (PALAVGAATGFIGGIVAILAL). The Cytoplasmic segment spans residues 499-510 (PRTRIQKPIPLP).

It belongs to the glycoside-pentoside-hexuronide (GPH) cation symporter transporter (TC 2.A.2.4) family. Homodimer. Interacts with SUC2 and SUC3. In terms of tissue distribution, expressed in sink tissues, mostly in minor veins of sink leaves. Localized in companion cells.

The protein localises to the cell membrane. It catalyses the reaction sucrose(out) + H(+)(out) = sucrose(in) + H(+)(in). It participates in glycan biosynthesis; sucrose metabolism. In terms of biological role, responsible for the transport of sucrose into the cell, with the concomitant uptake of protons (symport system). Can also transport maltose at a lesser rate. May also transport biotin. The polypeptide is Sucrose transport protein SUC4 (Arabidopsis thaliana (Mouse-ear cress)).